The following is a 565-amino-acid chain: Wee1-like protein kinase 2 (565 aa).

Residues 217–493 (FLELERIGVG…TKHPILRPSL (277 aa)) enclose the Protein kinase domain. Residues 223-231 (IGVGEFGSV) and Lys-246 contribute to the ATP site. The active-site Proton acceptor is Asp-344. Asn-349 and Asp-383 together coordinate Mg(2+). Positions 496–522 (AVQLQKQLNVEKCKTAMLERELKAARL) form a coiled coil. The tract at residues 531–553 (PLGNANLQESETSPKKNNKRLVG) is disordered.

It belongs to the protein kinase superfamily. Ser/Thr protein kinase family. WEE1 subfamily.

It localises to the nucleus. The catalysed reaction is L-tyrosyl-[protein] + ATP = O-phospho-L-tyrosyl-[protein] + ADP + H(+). Oocyte-specific protein tyrosine kinase that phosphorylates and inhibits CDK1 and acts as a key regulator of meiosis. Required to maintain meiotic arrest in oocytes by phosphorylating CDK1 at 'Tyr-15', leading to inhibit CDK1 activity and prevent meiotic reentry. This Gallus gallus (Chicken) protein is Wee1-like protein kinase 2 (WEE2).